We begin with the raw amino-acid sequence, 347 residues long: NADH-ubiquinone oxidoreductase chain 2 (347 aa).

9 consecutive transmembrane segments (helical) span residues 3–23, 59–79, 89–109, 150–170, 178–198, 201–221, 237–257, 276–296, and 326–346; these read PMTF…VMMS, YFLT…INLL, LINP…LGLA, NLNI…WGGL, IMAY…MYNP, MLLN…LLMI, LPLI…LPPL, IILS…YTRI, and LPLM…TAIL.

It belongs to the complex I subunit 2 family. In terms of assembly, core subunit of respiratory chain NADH dehydrogenase (Complex I) which is composed of 45 different subunits. Interacts with TMEM242.

Its subcellular location is the mitochondrion inner membrane. It carries out the reaction a ubiquinone + NADH + 5 H(+)(in) = a ubiquinol + NAD(+) + 4 H(+)(out). Functionally, core subunit of the mitochondrial membrane respiratory chain NADH dehydrogenase (Complex I) which catalyzes electron transfer from NADH through the respiratory chain, using ubiquinone as an electron acceptor. Essential for the catalytic activity and assembly of complex I. The protein is NADH-ubiquinone oxidoreductase chain 2 of Nyctophilus arnhemensis (Northern long-eared bat).